The chain runs to 150 residues: Group IIC secretory phospholipase A2 (150 aa).

The signal sequence occupies residues 1–20; the sequence is MKGIAVFLVFIFCWTTSTLS. Intrachain disulfides connect cysteine 46–cysteine 143, cysteine 48–cysteine 64, cysteine 63–cysteine 121, cysteine 69–cysteine 150, cysteine 70–cysteine 114, cysteine 79–cysteine 107, cysteine 97–cysteine 112, and cysteine 99–cysteine 105. Residues tyrosine 47, glycine 49, and glycine 51 each coordinate Ca(2+). The active site involves histidine 67. Ca(2+) is bound at residue aspartate 68. Asparagine 92 carries an N-linked (GlcNAc...) asparagine glycan. The active site involves aspartate 115.

Belongs to the phospholipase A2 family. The cofactor is Ca(2+).

Its subcellular location is the secreted. It carries out the reaction a 1,2-diacyl-sn-glycero-3-phosphocholine + H2O = a 1-acyl-sn-glycero-3-phosphocholine + a fatty acid + H(+). PA2 catalyzes the calcium-dependent hydrolysis of the 2-acyl groups in 3-sn-phosphoglycerides. This Rattus norvegicus (Rat) protein is Group IIC secretory phospholipase A2 (Pla2g2c).